Consider the following 1048-residue polypeptide: MSDVNPPSDTPIPFSSSSTHSSHIPPWTFSCYPGSPCENGVMLYMRNVSHEELQRFKQLLLTELSTGTMPITWDQVETASWAEVVHLLIERFPGRRAWDVTSNIFAIMNCDKMCVVVRREINAILPTLEPEDLNVGETQVNLEEGESGKIRRYKSNVMEKFFPIWDITTWPGNQRDFFYQGVHRHEEYLPCLLLPKRPQGRQPKTVAIQGAPGIGKTILAKKVMFEWARNKFYAHKRWCAFYFHCQEVNQTTDQSFSELIEQKWPGSQDLVSKIMSKPDQLLLLLDGFEELTSTLIDRLEDLSEDWRQKLPGSVLLSSLLSKTMLPEATLLIMIRFTSWQTCKPLLKCPSLVTLPGFNTMEKIKYFQMYFGHTEEGDQVLSFAMENTILFSMCRVPVVCWMVCSGLKQQMERGNNLTQSCPNATSVFVRYISSLFPTRAENFSRKIHQAQLEGLCHLAADSMWHRKWVLGKEDLEEAKLDQTGVTAFLGMSILRRIAGEEDHYVFTLVTFQEFFAALFYVLCFPQRLKNFHVLSHVNIQRLIASPRGSKSYLSHMGLFLFGFLNEACASAVEQSFQCKVSFGNKRKLLKVIPLLHKCDPPSPGSGVPQLFYCLHEIREEAFVSQALNDYHKVVLRIGNNKEVQVSAFCLKRCQYLHEVELTVTLNFMNVWKLSSSSHPGSEAPESNGLHRWWQDLCSVFATNDKLEVLTMTNSVLGPPFLKALAAALRHPQCKLQKLLLRRVNSTMLNQDLIGVLTGNQHLRYLEIQHVEVESKAVKLLCRVLRSPRCRLQCLRLEDCLATPRIWTDLGNNLQGNGHLKTLILRKNSLENCGAYYLSVAQLERLSIENCNLTQLTCESLASCLRQSKMLTHLSLAENALKDEGAKHIWNALPHLRCPLQRLVLRKCDLTFNCCQDMISALCKNKTLKSLDLSFNSLKDDGVILLCEALKNPDCTLQILELENCLFTSICCQAMASMLRKNQHLRHLDLSKNAIGVYGILTLCEAFSSQKKREEVIFCIPAWTRITSFSPTPHPPDFTGKSDCLSQINP.

Positions 1–23 (MSDVNPPSDTPIPFSSSSTHSSH) are disordered. The span at 11–23 (PIPFSSSSTHSSH) shows a compositional bias: low complexity. Residues 33–131 (PGSPCENGVM…NAILPTLEPE (99 aa)) form the Pyrin domain. In terms of domain architecture, NACHT spans 204–527 (KTVAIQGAPG…FYVLCFPQRL (324 aa)). 210–217 (GAPGIGKT) is an ATP binding site. 5 LRR repeats span residues 815–838 (NGHLKTLILRKNSLENCGAYYLSV), 839–861 (AQLERLSIENCNLTQLTCESLAS), 866–890 (SKMLTHLSLAENALKDEGAKHIWNA), 923–950 (NKTLKSLDLSFNSLKDDGVILLCEALKN), and 980–1007 (NQHLRHLDLSKNAIGVYGILTLCEAFSS). Residues 1029–1048 (PTPHPPDFTGKSDCLSQINP) are disordered.

Belongs to the NLRP family.

The protein localises to the cytoplasm. In terms of biological role, involved in inflammation. In Homo sapiens (Human), this protein is NACHT, LRR and PYD domains-containing protein 8 (NLRP8).